The primary structure comprises 415 residues: S-inosyl-L-homocysteine hydrolase (415 aa).

Substrate is bound by residues aspartate 123 and glutamate 148. Position 149 to 151 (149 to 151) interacts with NAD(+); that stretch reads TTT. Substrate is bound by residues lysine 178 and aspartate 182. Residues asparagine 183, 212-217, glutamate 235, 291-293, and asparagine 337 each bind NAD(+); these read GYGWCG and AGH.

Belongs to the adenosylhomocysteinase family. As to quaternary structure, exists both as a homotetramer and a homodimer, in a 4:1 ratio. Requires NAD(+) as cofactor.

It is found in the cytoplasm. The catalysed reaction is S-inosyl-L-homocysteine + H2O = L-homocysteine + inosine. It participates in amino-acid biosynthesis; S-adenosyl-L-methionine biosynthesis. Its function is as follows. Catalyzes the hydrolysis of S-inosyl-L-homocysteine (SIH) to L-homocysteine (Hcy) and inosine. Likely functions in a S-adenosyl-L-methionine (SAM) recycling pathway from S-adenosyl-L-homocysteine (SAH) produced from SAM-dependent methylation reactions. Can also catalyze the reverse reaction in vitro, i.e. the synthesis of SIH from Hcy and inosine. Is specific for SIH and inosine as it is unable to either hydrolyze SAH or synthesize SAH from adenosine and Hcy. The chain is S-inosyl-L-homocysteine hydrolase from Methanocaldococcus jannaschii (strain ATCC 43067 / DSM 2661 / JAL-1 / JCM 10045 / NBRC 100440) (Methanococcus jannaschii).